The chain runs to 339 residues: Purple acid phosphatase 4 (339 aa).

The first 31 residues, 1-31 (MSSKFDIGSLSIVMTLLICFLLLSLAPKLEA), serve as a signal peptide directing secretion. Asp-53 is a binding site for Fe cation. The N-linked (GlcNAc...) asparagine glycan is linked to Asn-61. Residues Asp-86 and Tyr-89 each coordinate Fe cation. Asp-86 is a binding site for Zn(2+). Zn(2+) contacts are provided by Asn-124 and His-218. The Proton donor role is filled by His-227. Zn(2+) is bound at residue His-253. Residue 253 to 255 (HDH) coordinates substrate. His-255 contacts Fe cation. An N-linked (GlcNAc...) asparagine glycan is attached at Asn-284.

Belongs to the metallophosphoesterase superfamily. Purple acid phosphatase family. Homodimer. The cofactor is Fe cation. Zn(2+) is required as a cofactor. In terms of tissue distribution, expressed in roots, stems, leaves, flowers and siliques.

It localises to the secreted. It carries out the reaction a phosphate monoester + H2O = an alcohol + phosphate. The protein is Purple acid phosphatase 4 (PAP4) of Arabidopsis thaliana (Mouse-ear cress).